Consider the following 171-residue polypeptide: MQINLEKYIRTVEDFPKKGISFKDISPLLADGKALNYTIVEMASLAKDVDIIVGPDARGFLFGTPTAAFLSKPFIMIRKAGKLPGEVEEFAYELEYGSAILEVQVDMIKPGQKVAIIDDVLATGGTVKAITKMIERAGAIVDKIIFLIELEQLQGRKKLENYDVISLIKIS.

Belongs to the purine/pyrimidine phosphoribosyltransferase family. As to quaternary structure, homodimer.

It localises to the cytoplasm. It carries out the reaction AMP + diphosphate = 5-phospho-alpha-D-ribose 1-diphosphate + adenine. It functions in the pathway purine metabolism; AMP biosynthesis via salvage pathway; AMP from adenine: step 1/1. Functionally, catalyzes a salvage reaction resulting in the formation of AMP, that is energically less costly than de novo synthesis. This Mesomycoplasma hyopneumoniae (strain 232) (Mycoplasma hyopneumoniae) protein is Adenine phosphoribosyltransferase.